Here is a 371-residue protein sequence, read N- to C-terminus: Aspartate-semialdehyde dehydrogenase (371 aa).

NADP(+) is bound by residues 9 to 12 (RGMV), 37 to 38 (TS), and Gln-73. Arg-102 contacts phosphate. Catalysis depends on Cys-135, which acts as the Acyl-thioester intermediate. Gln-162 provides a ligand contact to substrate. NADP(+)-binding positions include 165–166 (SG) and Pro-193. Glu-241 contributes to the substrate binding site. Lys-244 serves as a coordination point for phosphate. Residue Arg-268 participates in substrate binding. Catalysis depends on His-275, which acts as the Proton acceptor. Residue Gln-351 participates in NADP(+) binding.

This sequence belongs to the aspartate-semialdehyde dehydrogenase family. As to quaternary structure, homodimer.

The catalysed reaction is L-aspartate 4-semialdehyde + phosphate + NADP(+) = 4-phospho-L-aspartate + NADPH + H(+). The protein operates within amino-acid biosynthesis; L-lysine biosynthesis via DAP pathway; (S)-tetrahydrodipicolinate from L-aspartate: step 2/4. Its pathway is amino-acid biosynthesis; L-methionine biosynthesis via de novo pathway; L-homoserine from L-aspartate: step 2/3. It participates in amino-acid biosynthesis; L-threonine biosynthesis; L-threonine from L-aspartate: step 2/5. Its function is as follows. Catalyzes the NADPH-dependent formation of L-aspartate-semialdehyde (L-ASA) by the reductive dephosphorylation of L-aspartyl-4-phosphate. In Neisseria meningitidis serogroup B (strain ATCC BAA-335 / MC58), this protein is Aspartate-semialdehyde dehydrogenase.